A 196-amino-acid polypeptide reads, in one-letter code: Interferon lambda-3 (196 aa).

An N-terminal signal peptide occupies residues 1–21; it reads MTGDCMPVLVLMAAVLTVTGA. 3 disulfide bridges follow: C37–C136, C71–C169, and C188–C195.

This sequence belongs to the lambda interferon family.

It is found in the secreted. Functionally, cytokine with antiviral, antitumour and immunomodulatory activities. Plays a critical role in the antiviral host defense, predominantly in the epithelial tissues. Acts as a ligand for the heterodimeric class II cytokine receptor composed of IL10RB and IFNLR1, and receptor engagement leads to the activation of the JAK/STAT signaling pathway resulting in the expression of IFN-stimulated genes (ISG), which mediate the antiviral state. Has a restricted receptor distribution and therefore restricted targets: is primarily active in epithelial cells and this cell type-selective action is because of the epithelial cell-specific expression of its receptor IFNLR1. Seems not to be essential for early virus-activated host defense in vaginal infection, but plays an important role in Toll-like receptor (TLR)-induced antiviral defense. Plays a significant role in the antiviral immune defense in the intestinal epithelium. Exerts an immunomodulatory effect by up-regulating MHC class I antigen expression. This Homo sapiens (Human) protein is Interferon lambda-3 (IFNL3).